The sequence spans 296 residues: Maltose/maltodextrin transport system permease protein MalG (296 aa).

The Cytoplasmic portion of the chain corresponds to 1–12 (MAMVQPKSQKAR). Residues 13–35 (LFITHLLLLLFIAAIMFPLLMVV) form a helical membrane-spanning segment. Residues 36 to 88 (AISLRQGNFATGSLIPEQISWDHWKLALGFSVEQADGRITPPPFPVLLWLWNS) are Periplasmic-facing. The region spanning 85 to 281 (LWNSVKVAGI…LPITIVFLLA (197 aa)) is the ABC transmembrane type-1 domain. The helical transmembrane segment at 89–111 (VKVAGISAIGIVALSTTCAYAFA) threads the bilayer. Residues 112–123 (RMRFPGKATLLK) lie on the Cytoplasmic side of the membrane. The helical transmembrane segment at 124-143 (GMLIFQMFPAVLSLVALYAL) threads the bilayer. Over 144 to 152 (FDRLGEYIP) the chain is Periplasmic. Residues 153 to 175 (FIGLNTHGGVIFAYLGGIALHVW) form a helical membrane-spanning segment. Over 176-204 (TIKGYFETIDSSLEEAAALDGATPWQAFR) the chain is Cytoplasmic. Residues 205 to 227 (LVLLPLSVPILAVVFILSFIAAI) form a helical membrane-spanning segment. At 228–257 (TEVPVASLLLRDVNSYTLAVGMQQYLNPQN) the chain is on the periplasmic side. The helical transmembrane segment at 258 to 280 (YLWGDFAAAAVMSALPITIVFLL) threads the bilayer. The Cytoplasmic segment spans residues 281–296 (AQRWLVNGLTAGGVKG).

This sequence belongs to the binding-protein-dependent transport system permease family. MalFG subfamily. As to quaternary structure, the complex is composed of two ATP-binding proteins (MalK), two transmembrane proteins (MalG and MalF) and a solute-binding protein (MalE).

It is found in the cell inner membrane. Functionally, part of the ABC transporter complex MalEFGK involved in maltose/maltodextrin import. Probably responsible for the translocation of the substrate across the membrane. The protein is Maltose/maltodextrin transport system permease protein MalG (malG) of Escherichia coli O157:H7.